Consider the following 503-residue polypeptide: GMP synthase [glutamine-hydrolyzing] (503 aa).

The Glutamine amidotransferase type-1 domain occupies 3–189 (PVLVVDFGSQ…AFLSSFAAPN (187 aa)). The active-site Nucleophile is C80. Residues H165 and E167 contribute to the active site. A GMPS ATP-PPase domain is found at 190–380 (WDPEQTICGT…LGIPKHIVHR (191 aa)). Residue 217 to 223 (SGGVDSV) participates in ATP binding.

In terms of assembly, homodimer.

It carries out the reaction XMP + L-glutamine + ATP + H2O = GMP + L-glutamate + AMP + diphosphate + 2 H(+). The protein operates within purine metabolism; GMP biosynthesis; GMP from XMP (L-Gln route): step 1/1. Catalyzes the synthesis of GMP from XMP. The protein is GMP synthase [glutamine-hydrolyzing] of Tropheryma whipplei (strain Twist) (Whipple's bacillus).